The chain runs to 207 residues: Thiamine-phosphate synthase (207 aa).

4-amino-2-methyl-5-(diphosphooxymethyl)pyrimidine contacts are provided by residues 36–40 (QLRIK) and Asp-68. Mg(2+) is bound by residues Asp-69 and Asp-88. Ser-106 serves as a coordination point for 4-amino-2-methyl-5-(diphosphooxymethyl)pyrimidine. A 2-[(2R,5Z)-2-carboxy-4-methylthiazol-5(2H)-ylidene]ethyl phosphate-binding site is contributed by 132–134 (TQT). Lys-135 provides a ligand contact to 4-amino-2-methyl-5-(diphosphooxymethyl)pyrimidine. 2-[(2R,5Z)-2-carboxy-4-methylthiazol-5(2H)-ylidene]ethyl phosphate contacts are provided by residues Gly-162 and 182 to 183 (VS).

The protein belongs to the thiamine-phosphate synthase family. Mg(2+) serves as cofactor.

It carries out the reaction 2-[(2R,5Z)-2-carboxy-4-methylthiazol-5(2H)-ylidene]ethyl phosphate + 4-amino-2-methyl-5-(diphosphooxymethyl)pyrimidine + 2 H(+) = thiamine phosphate + CO2 + diphosphate. It catalyses the reaction 2-(2-carboxy-4-methylthiazol-5-yl)ethyl phosphate + 4-amino-2-methyl-5-(diphosphooxymethyl)pyrimidine + 2 H(+) = thiamine phosphate + CO2 + diphosphate. The enzyme catalyses 4-methyl-5-(2-phosphooxyethyl)-thiazole + 4-amino-2-methyl-5-(diphosphooxymethyl)pyrimidine + H(+) = thiamine phosphate + diphosphate. The protein operates within cofactor biosynthesis; thiamine diphosphate biosynthesis; thiamine phosphate from 4-amino-2-methyl-5-diphosphomethylpyrimidine and 4-methyl-5-(2-phosphoethyl)-thiazole: step 1/1. Condenses 4-methyl-5-(beta-hydroxyethyl)thiazole monophosphate (THZ-P) and 2-methyl-4-amino-5-hydroxymethyl pyrimidine pyrophosphate (HMP-PP) to form thiamine monophosphate (TMP). This chain is Thiamine-phosphate synthase, found in Pyrococcus horikoshii (strain ATCC 700860 / DSM 12428 / JCM 9974 / NBRC 100139 / OT-3).